Consider the following 316-residue polypeptide: Succinoglycan biosynthesis protein ExoV (316 aa).

The protein operates within glycan metabolism; exopolysaccharide biosynthesis. This is Succinoglycan biosynthesis protein ExoV (exoV) from Rhizobium meliloti (strain 1021) (Ensifer meliloti).